A 106-amino-acid chain; its full sequence is MNDSEFHRLADSLWMTIEERLDDWDGDSDIDCEINGGVLTISFENGSKIIINRQEPLHQVWLATKQGGYHFDLKGDEWICDRSGETFWDLLEQAASQQAGETVKFR.

This sequence belongs to the frataxin family.

Involved in iron-sulfur (Fe-S) cluster assembly. May act as a regulator of Fe-S biogenesis. This is Iron-sulfur cluster assembly protein CyaY from Klebsiella pneumoniae subsp. pneumoniae (strain ATCC 700721 / MGH 78578).